The chain runs to 73 residues: MKYIILFLVLIGLQANLALGSKCKCDCTKYPYSPVCAKELKTGDTETFNNVCQLQCYNCTHMKNYVVIYSGSC.

Residues 1–20 form the signal peptide; sequence MKYIILFLVLIGLQANLALG. One can recognise a Kazal-like domain in the interval 21 to 73; that stretch reads SKCKCDCTKYPYSPVCAKELKTGDTETFNNVCQLQCYNCTHMKNYVVIYSGSC. 3 disulfide bridges follow: cysteine 23–cysteine 59, cysteine 27–cysteine 52, and cysteine 36–cysteine 73.

In terms of tissue distribution, expressed by the venom gland (anterior main gland) (at protein level).

The protein localises to the secreted. Functionally, may act as a serine protease inhibitor, since it possess the kazal serine protease inhibitor signature. The polypeptide is Kazal peptide Pr13a (Platymeris rhadamanthus (Red spot assassin bug)).